Consider the following 445-residue polypeptide: Tubulin beta-4 chain (445 aa).

The GTP site is built by glutamine 11, glutamate 69, serine 138, glycine 142, threonine 143, glycine 144, asparagine 204, and asparagine 226. Glutamate 69 contacts Mg(2+). A disordered region spans residues 421–445 (EYQQYQDATADEEYDEEEEEERDAE). Residues 429 to 445 (TADEEYDEEEEEERDAE) show a composition bias toward acidic residues.

Belongs to the tubulin family. As to quaternary structure, dimer of alpha and beta chains. A typical microtubule is a hollow water-filled tube with an outer diameter of 25 nm and an inner diameter of 15 nM. Alpha-beta heterodimers associate head-to-tail to form protofilaments running lengthwise along the microtubule wall with the beta-tubulin subunit facing the microtubule plus end conferring a structural polarity. Microtubules usually have 13 protofilaments but different protofilament numbers can be found in some organisms and specialized cells. Mg(2+) serves as cofactor.

It is found in the cytoplasm. The protein localises to the cytoskeleton. Its function is as follows. Tubulin is the major constituent of microtubules, a cylinder consisting of laterally associated linear protofilaments composed of alpha- and beta-tubulin heterodimers. Microtubules grow by the addition of GTP-tubulin dimers to the microtubule end, where a stabilizing cap forms. Below the cap, tubulin dimers are in GDP-bound state, owing to GTPase activity of alpha-tubulin. The polypeptide is Tubulin beta-4 chain (TUBB4) (Triticum aestivum (Wheat)).